The primary structure comprises 564 residues: Proline--tRNA ligase (564 aa).

This sequence belongs to the class-II aminoacyl-tRNA synthetase family. ProS type 1 subfamily. Homodimer.

It is found in the cytoplasm. It catalyses the reaction tRNA(Pro) + L-proline + ATP = L-prolyl-tRNA(Pro) + AMP + diphosphate. Catalyzes the attachment of proline to tRNA(Pro) in a two-step reaction: proline is first activated by ATP to form Pro-AMP and then transferred to the acceptor end of tRNA(Pro). As ProRS can inadvertently accommodate and process non-cognate amino acids such as alanine and cysteine, to avoid such errors it has two additional distinct editing activities against alanine. One activity is designated as 'pretransfer' editing and involves the tRNA(Pro)-independent hydrolysis of activated Ala-AMP. The other activity is designated 'posttransfer' editing and involves deacylation of mischarged Ala-tRNA(Pro). The misacylated Cys-tRNA(Pro) is not edited by ProRS. This Coxiella burnetii (strain RSA 331 / Henzerling II) protein is Proline--tRNA ligase.